The chain runs to 495 residues: Fibronectin type III and SPRY domain-containing protein 1 (495 aa).

The stretch at 4 to 99 forms a coiled coil; the sequence is QKESLRKIIT…ALESSEELLE (96 aa). The COS domain maps to 105–162; sequence LCSSENDSFTQAAKDIKDSVTMAPAFRLSLKAKASDSMNHMMVDFTHERNLLQSITFL. The 105-residue stretch at 164-268 folds into the Fibronectin type-III domain; that stretch reads VPATPEIHVA…EPVTLETHAF (105 aa). Positions 281 to 476 constitute a B30.2/SPRY domain; the sequence is LKVEDLSVEW…VQTGLQVPSI (196 aa). The interval 306 to 332 is disordered; sequence KNRTNSPMHSPARTAMMSPKRAPSARV. Residue serine 490 is modified to Phosphoserine.

Oligomerization is required for binding to microtubules.

It localises to the cytoplasm. It is found in the cytoskeleton. Its subcellular location is the microtubule organizing center. The protein localises to the centrosome. The protein resides in the nucleus. It localises to the cleavage furrow. In terms of biological role, may be involved in microtubule organization and stabilization. The polypeptide is Fibronectin type III and SPRY domain-containing protein 1 (fsd1) (Danio rerio (Zebrafish)).